The sequence spans 308 residues: Mitoferrin (308 aa).

6 helical membrane passes run 13-29, 69-89, 111-131, 168-184, 213-233, and 285-302; these read GGSF…AGFA, ITGL…SHAV, IKVG…ASPM, YTTT…VYFA, LVAG…FDVV, and MVFH…YEYF. 3 Solcar repeats span residues 14 to 100, 108 to 192, and 207 to 305; these read GSFY…LKFK, HHPI…LKKI, and YQLI…FKFI.

The protein belongs to the mitochondrial carrier (TC 2.A.29) family.

The protein localises to the mitochondrion inner membrane. In terms of biological role, mitochondrial solute carriers shuttle metabolites, nucleotides, and cofactors through the mitochondrial inner membrane. Mitochondrial iron transporter that mediates iron uptake. Probably required for heme synthesis of hemoproteins and Fe-S cluster assembly. This is Mitoferrin (mcfF) from Dictyostelium discoideum (Social amoeba).